The primary structure comprises 102 residues: Carboxysome shell protein CsoS1C (102 aa).

A BMC domain is found at 8–93 (ALGMIETRGL…PHKEVEPVLA (86 aa)).

It belongs to the bacterial microcompartments protein family. CsoS1 subfamily. In terms of assembly, homohexamer with a small central pore.

The protein resides in the carboxysome. Functionally, one of shell proteins of the carboxysome, a polyhedral inclusion where RuBisCO (ribulose bisphosphate carboxylase, ccbL-ccbS) is sequestered. Assembles into hexamers which make sheets that form the facets of the polyhedral carboxysome. The shell probably limits the diffusion of CO(2) into and out of the carboxysome. The protein is Carboxysome shell protein CsoS1C of Hydrogenovibrio crunogenus (strain DSM 25203 / XCL-2) (Thiomicrospira crunogena).